The primary structure comprises 315 residues: MNVVNVVPMHLPPPPPRPRGEQHVSVLGREVLAALSPVSEGVYVDATLGAGGHTATILETPGARVIGIDRDERALAIARARLARAGDRVTYVHGEFSEIERHLAALGVPQVDGLLADIGVSSMQLDDPGRGMSFRAEGPLDMRMDSSRGETALELIERLSDEELADLIYRYGEERRSRRVARCIKQAADSGELVTTLDLRRAVVRAVGPARIGGVDPATRTFQALRIAVNGELDQLEALLEAAPRIIAPGGVLAVISFHSLEDRIVKRALREPEVWEPLTKKPVTAGDDEVEGNPRARSAKLRAARRVGGAEALA.

A disordered region spans residues Met1–Glu21. S-adenosyl-L-methionine contacts are provided by residues Gly51 to His53, Asp69, Phe96, Asp117, and Gln124. The interval Lys281 to Ala315 is disordered.

The protein belongs to the methyltransferase superfamily. RsmH family.

The protein localises to the cytoplasm. It carries out the reaction cytidine(1402) in 16S rRNA + S-adenosyl-L-methionine = N(4)-methylcytidine(1402) in 16S rRNA + S-adenosyl-L-homocysteine + H(+). In terms of biological role, specifically methylates the N4 position of cytidine in position 1402 (C1402) of 16S rRNA. The sequence is that of Ribosomal RNA small subunit methyltransferase H from Sorangium cellulosum (strain So ce56) (Polyangium cellulosum (strain So ce56)).